Here is a 570-residue protein sequence, read N- to C-terminus: D-xylulose kinase A (570 aa).

Residues His-95, Arg-166, Asp-282, and Asn-283 each contribute to the substrate site. ATP is bound by residues Trp-364, 469–470, and Asn-473; that span reads GG.

The protein belongs to the FGGY kinase family.

It localises to the cytoplasm. The catalysed reaction is D-xylulose + ATP = D-xylulose 5-phosphate + ADP + H(+). In terms of biological role, highly specific D-xylulose kinase which participates in the catabolism of xylose. Xylose is a major component of hemicelluloses such as xylan. Most fungi utilize D-xylose via three enzymatic reactions, xylose reductase (XR), xylitol dehydrogenase (XDH), and xylulokinase, to form xylulose 5-phosphate, which enters pentose phosphate pathway. The sequence is that of D-xylulose kinase A (xkiA) from Aspergillus niger.